The following is a 47-amino-acid chain: Ruminococcin-A (47 aa).

Positions 1 to 23 (MRNDVLTLTNPMEENELEQILGG) are cleaved as a signal peptide. Thr-30 and Thr-39 each carry 2,3-didehydrobutyrine. The segment at residues 30–35 (TISHEC) is a cross-link (beta-methyllanthionine (Thr-Cys)). A cross-link (lanthionine (Ser-Cys)) is located at residues 32-46 (SHECNMNTWQFLFTC). The beta-methyllanthionine (Thr-Cys) cross-link spans 45-47 (TCC).

Belongs to the type A lantibiotic family. Maturation of lantibiotics involves the enzymatic conversion of Thr, and Ser into dehydrated AA and the formation of thioether bonds with cysteine. This is followed by membrane translocation and cleavage of the modified precursor.

It is found in the secreted. Functionally, lanthionine-containing peptide antibiotic (lantibiotic) active on Gram-positive bacteria. The bactericidal activity of lantibiotics is based on depolarization of energized bacterial cytoplasmic membranes, initiated by the formation of aqueous transmembrane pores. Ruminococcin A is a broad spectrum bacteriocin exhibiting activity against a wide range of pathogenic clostridia and B.longum. The sequence is that of Ruminococcin-A (rumA1) from Blautia hansenii (Ruminococcus hansenii).